The following is a 1423-amino-acid chain: ABC transporter G family member 40 (1423 aa).

Over residues 1–19 the composition is skewed to polar residues; it reads MEGTSFHQASNSMRRNSSV. The disordered stretch occupies residues 1 to 36; sequence MEGTSFHQASNSMRRNSSVWKKDSGREIFSRSSREE. Residue Asn16 is glycosylated (N-linked (GlcNAc...) asparagine). Residues 20–34 are compositionally biased toward basic and acidic residues; it reads WKKDSGREIFSRSSR. Positions 154-427 constitute an ABC transporter 1 domain; sequence LNTLHLVPNR…FETMGFKCPP (274 aa). 187–194 is an ATP binding site; that stretch reads GPPSSGKT. N-linked (GlcNAc...) asparagine glycosylation is present at Asn376. The region spanning 505 to 718 is the ABC transmembrane type-2 1 domain; sequence ELVKTSFSRE…GQNAILANEF (214 aa). A run of 6 helical transmembrane segments spans residues 523–543, 562–582, 611–631, 643–663, 667–687, and 696–716; these read FVYY…MTLF, ALFF…SMTI, IPIS…VIGF, ILLV…AALG, IVAN…GGVV, and WWIW…ILAN. The N-linked (GlcNAc...) asparagine glycan is linked to Asn729. A helical membrane pass occupies residues 756-776; sequence GALLGFVVLFNFGFTLALTFL. The ABC transporter 2 domain occupies 825 to 1077; it reads ITFDNVVYSV…HLINYFESIQ (253 aa). 870–877 is an ATP binding site; that stretch reads GVSGAGKT. Asn895 carries an N-linked (GlcNAc...) asparagine glycan. Position 962 is a phosphothreonine (Thr962). One can recognise an ABC transmembrane type-2 2 domain in the interval 1150–1364; sequence TQCMASLWKQ…TLYGLIASQF (215 aa). 6 consecutive transmembrane segments (helical) span residues 1174-1194, 1207-1227, 1257-1277, 1284-1304, 1314-1334, and 1341-1361; these read FLFT…LGGK, SMYT…QPVV, IPYV…MIGF, FFWY…YGMM, IASV…GFLI, and VWWE…GLIA. The N-linked (GlcNAc...) asparagine glycan is linked to Asn1375. A helical transmembrane segment spans residues 1395-1415; sequence VVAAMNVIFPLLFAVIFAIGI.

It belongs to the ABC transporter superfamily. ABCG family. PDR (TC 3.A.1.205) subfamily. In terms of assembly, interacts with LECRK91 and LECRK92. Mostly observed in inflorescence meristems relative to cauline leaves and developing siliques. Ubiquitous with higher levels in leaves, stems and flowers. Also present in primary and lateral roots. In seeds, mainly expressed in the embryo and, to a lesser extent, in the endosperm.

It is found in the cell membrane. The enzyme catalyses abscisate(out) + ATP + H2O = abscisate(in) + ADP + phosphate + H(+). Its activity is regulated as follows. Inhibited by glibenclamide, verapamil and vanadate (ABC transporters inhibitors). Its function is as follows. High affinity abscisic acid (ABA) transporter that mediates the import of ABA, with a preference for (+)-ABA, through the plasma membrane, especially in guard cells, and is involved in the intercellular and intracellular ABA signaling pathways leading, for example, to stomatal closure, thus conferring drought tolerance. Together with ABCG30, import into the embryo the ABA delivered from the endosperm via ABCG25 and ABCG31-mediated export to suppress radicle extension and subsequent embryonic growth. May be a general defense protein. Functions as a pump to exclude Pb(2+) ions and/or Pb(2+)-containing toxic compounds from the cytoplasm. Contributes to Pb(2+) ions resistance. Confers some resistance to the terpene sclareol. Functionally, (Microbial infection) Involved in resistance response to the pathogenic oomycetes Phytophthora infestans and Phytophthora capsici. This Arabidopsis thaliana (Mouse-ear cress) protein is ABC transporter G family member 40.